The primary structure comprises 308 residues: 4-hydroxy-3-methylbut-2-enyl diphosphate reductase (308 aa).

Cys12 is a [4Fe-4S] cluster binding site. (2E)-4-hydroxy-3-methylbut-2-enyl diphosphate is bound by residues His41 and His74. The dimethylallyl diphosphate site is built by His41 and His74. Positions 41 and 74 each coordinate isopentenyl diphosphate. Cys96 contacts [4Fe-4S] cluster. His124 is a binding site for (2E)-4-hydroxy-3-methylbut-2-enyl diphosphate. Residue His124 participates in dimethylallyl diphosphate binding. An isopentenyl diphosphate-binding site is contributed by His124. The active-site Proton donor is the Glu126. Residue Thr166 participates in (2E)-4-hydroxy-3-methylbut-2-enyl diphosphate binding. Cys196 is a [4Fe-4S] cluster binding site. The (2E)-4-hydroxy-3-methylbut-2-enyl diphosphate site is built by Ser224, Ser225, Asn226, and Ser268. Ser224, Ser225, Asn226, and Ser268 together coordinate dimethylallyl diphosphate. 4 residues coordinate isopentenyl diphosphate: Ser224, Ser225, Asn226, and Ser268.

It belongs to the IspH family. Requires [4Fe-4S] cluster as cofactor.

The catalysed reaction is isopentenyl diphosphate + 2 oxidized [2Fe-2S]-[ferredoxin] + H2O = (2E)-4-hydroxy-3-methylbut-2-enyl diphosphate + 2 reduced [2Fe-2S]-[ferredoxin] + 2 H(+). The enzyme catalyses dimethylallyl diphosphate + 2 oxidized [2Fe-2S]-[ferredoxin] + H2O = (2E)-4-hydroxy-3-methylbut-2-enyl diphosphate + 2 reduced [2Fe-2S]-[ferredoxin] + 2 H(+). It functions in the pathway isoprenoid biosynthesis; dimethylallyl diphosphate biosynthesis; dimethylallyl diphosphate from (2E)-4-hydroxy-3-methylbutenyl diphosphate: step 1/1. Its pathway is isoprenoid biosynthesis; isopentenyl diphosphate biosynthesis via DXP pathway; isopentenyl diphosphate from 1-deoxy-D-xylulose 5-phosphate: step 6/6. Catalyzes the conversion of 1-hydroxy-2-methyl-2-(E)-butenyl 4-diphosphate (HMBPP) into a mixture of isopentenyl diphosphate (IPP) and dimethylallyl diphosphate (DMAPP). Acts in the terminal step of the DOXP/MEP pathway for isoprenoid precursor biosynthesis. The protein is 4-hydroxy-3-methylbut-2-enyl diphosphate reductase of Vesicomyosocius okutanii subsp. Calyptogena okutanii (strain HA).